The sequence spans 196 residues: Imidazole glycerol phosphate synthase subunit HisH (196 aa).

Positions 2–196 (KVVILDTGCA…AQLLKNFLEM (195 aa)) constitute a Glutamine amidotransferase type-1 domain. The active-site Nucleophile is the cysteine 77. Catalysis depends on residues histidine 178 and glutamate 180.

In terms of assembly, heterodimer of HisH and HisF.

Its subcellular location is the cytoplasm. The catalysed reaction is 5-[(5-phospho-1-deoxy-D-ribulos-1-ylimino)methylamino]-1-(5-phospho-beta-D-ribosyl)imidazole-4-carboxamide + L-glutamine = D-erythro-1-(imidazol-4-yl)glycerol 3-phosphate + 5-amino-1-(5-phospho-beta-D-ribosyl)imidazole-4-carboxamide + L-glutamate + H(+). It carries out the reaction L-glutamine + H2O = L-glutamate + NH4(+). It functions in the pathway amino-acid biosynthesis; L-histidine biosynthesis; L-histidine from 5-phospho-alpha-D-ribose 1-diphosphate: step 5/9. Its function is as follows. IGPS catalyzes the conversion of PRFAR and glutamine to IGP, AICAR and glutamate. The HisH subunit catalyzes the hydrolysis of glutamine to glutamate and ammonia as part of the synthesis of IGP and AICAR. The resulting ammonia molecule is channeled to the active site of HisF. The protein is Imidazole glycerol phosphate synthase subunit HisH of Pectobacterium atrosepticum (strain SCRI 1043 / ATCC BAA-672) (Erwinia carotovora subsp. atroseptica).